The primary structure comprises 138 residues: Ribosome-binding factor A (138 aa).

Belongs to the RbfA family. As to quaternary structure, monomer. Binds 30S ribosomal subunits, but not 50S ribosomal subunits or 70S ribosomes.

The protein localises to the cytoplasm. One of several proteins that assist in the late maturation steps of the functional core of the 30S ribosomal subunit. Associates with free 30S ribosomal subunits (but not with 30S subunits that are part of 70S ribosomes or polysomes). Required for efficient processing of 16S rRNA. May interact with the 5'-terminal helix region of 16S rRNA. The sequence is that of Ribosome-binding factor A from Pseudoalteromonas atlantica (strain T6c / ATCC BAA-1087).